The following is a 595-amino-acid chain: Anthranilate synthase alpha subunit 1, chloroplastic (595 aa).

The N-terminal 54 residues, 1-54 (MSSSMNVATMQALTFSRRLLPSVASRYLSSSSVTVTGYSGRSSAYAPSFRSIKC), are a transit peptide targeting the chloroplast. Position 55 is an N-acetylvaline (Val-55). L-tryptophan-binding positions include Ser-115 and 356–358 (PYM). Residue 391–392 (GT) participates in chorismate binding. Position 418 (Glu-418) interacts with Mg(2+). Residues Tyr-506, Arg-526, 558 to 560 (GAG), and Gly-560 each bind chorismate. Glu-573 is a Mg(2+) binding site.

This sequence belongs to the anthranilate synthase component I family. In terms of assembly, heterotetramer consisting of two non-identical subunits: a beta subunit and a large alpha subunit. Mg(2+) serves as cofactor. Expressed in the central cylinder of mature primary root zones, including pericycle and early lateral root primordia, and vasculature of cotyledons.

The protein localises to the plastid. It localises to the chloroplast. The catalysed reaction is chorismate + L-glutamine = anthranilate + pyruvate + L-glutamate + H(+). It functions in the pathway amino-acid biosynthesis; L-tryptophan biosynthesis; L-tryptophan from chorismate: step 1/5. Feedback inhibition by tryptophan. In terms of biological role, part of a heterotetrameric complex that catalyzes the two-step biosynthesis of anthranilate, an intermediate in the biosynthesis of L-tryptophan. In the first step, the glutamine-binding beta subunit of anthranilate synthase (AS) provides the glutamine amidotransferase activity which generates ammonia as a substrate that, along with chorismate, is used in the second step, catalyzed by the large alpha subunit of AS to produce anthranilate. Plays an important regulatory role in auxin production via the tryptophan-dependent biosynthetic pathway. The polypeptide is Anthranilate synthase alpha subunit 1, chloroplastic (ASA1) (Arabidopsis thaliana (Mouse-ear cress)).